The sequence spans 415 residues: Esterase FrsA (415 aa).

The protein belongs to the FrsA family.

It catalyses the reaction a carboxylic ester + H2O = an alcohol + a carboxylate + H(+). Its function is as follows. Catalyzes the hydrolysis of esters. This chain is Esterase FrsA, found in Serratia proteamaculans (strain 568).